A 450-amino-acid polypeptide reads, in one-letter code: Glucose-6-phosphate isomerase (450 aa).

Residue Thr-39 is modified to Phosphothreonine. Glu-291 (proton donor) is an active-site residue. Residues His-312 and Lys-426 contribute to the active site.

It belongs to the GPI family.

It localises to the cytoplasm. It catalyses the reaction alpha-D-glucose 6-phosphate = beta-D-fructose 6-phosphate. It participates in carbohydrate biosynthesis; gluconeogenesis. The protein operates within carbohydrate degradation; glycolysis; D-glyceraldehyde 3-phosphate and glycerone phosphate from D-glucose: step 2/4. Catalyzes the reversible isomerization of glucose-6-phosphate to fructose-6-phosphate. The chain is Glucose-6-phosphate isomerase from Bacillus thuringiensis (strain Al Hakam).